The primary structure comprises 855 residues: Receptor-like protein kinase THESEUS 1 (855 aa).

A signal peptide spans 1 to 22 (MVFTKSLLVLLWFLSCYTTTTS). Residues 23 to 415 (SALFNPPDNY…GGSGSKSKKK (393 aa)) are Extracellular-facing. Asparagine 41, asparagine 64, asparagine 75, asparagine 114, asparagine 118, asparagine 136, asparagine 143, asparagine 154, asparagine 168, asparagine 225, asparagine 242, asparagine 288, asparagine 353, and asparagine 376 each carry an N-linked (GlcNAc...) asparagine glycan. The chain crosses the membrane as a helical span at residues 416–436 (AVIIGSLVGAVTLILLIAVCC). The Cytoplasmic segment spans residues 437 to 855 (YCCLVASRKQ…FSQLVHPRGR (419 aa)). The Protein kinase domain maps to 510–783 (FDESSLLGVG…GDVLWNLEYA (274 aa)). Residues 516 to 524 (LGVGGFGRV) and lysine 538 each bind ATP. The active-site Proton acceptor is the aspartate 634. The segment at 822–855 (IDRGGVNSGTGTDDDAEDATTSAVFSQLVHPRGR) is disordered.

It belongs to the protein kinase superfamily. Ser/Thr protein kinase family. Post-translationally, autophosphorylated. As to expression, expressed in most vegetative tissues, including leaves, stems and roots, primarily in expanding cells and vascular tissue.

It localises to the cell membrane. Receptor-like protein kinase required for cell elongation during vegetative growth, mostly in a brassinosteroid-(BR-) independent manner. Mediates the response of growing plant cells to the perturbation of cellulose synthesis and may act as a cell-wall-integrity sensor. Controls ectopic-lignin accumulation in cellulose-deficient mutant backgrounds. This Arabidopsis thaliana (Mouse-ear cress) protein is Receptor-like protein kinase THESEUS 1 (THE1).